A 500-amino-acid chain; its full sequence is Galactose/methyl galactoside import ATP-binding protein MglA (500 aa).

2 consecutive ABC transporter domains span residues 8 to 243 (LEME…VGRD) and 257 to 500 (EMIL…AKYL). 40 to 47 (GENGAGKS) is an ATP binding site.

Belongs to the ABC transporter superfamily. Galactose/methyl galactoside importer (TC 3.A.1.2.3) family. As to quaternary structure, the complex is composed of one ATP-binding protein (MglA), two transmembrane proteins (MglC) and a solute-binding protein (MglB).

The protein localises to the cell inner membrane. It carries out the reaction D-galactose(out) + ATP + H2O = D-galactose(in) + ADP + phosphate + H(+). The enzyme catalyses methyl beta-D-galactoside(out) + ATP + H2O = methyl beta-D-galactoside(in) + ADP + phosphate + H(+). Part of the ABC transporter complex MglABC involved in galactose/methyl galactoside import. Responsible for energy coupling to the transport system. The chain is Galactose/methyl galactoside import ATP-binding protein MglA from Fusobacterium nucleatum subsp. nucleatum (strain ATCC 25586 / DSM 15643 / BCRC 10681 / CIP 101130 / JCM 8532 / KCTC 2640 / LMG 13131 / VPI 4355).